A 350-amino-acid polypeptide reads, in one-letter code: GDSL esterase/lipase At4g10955 (350 aa).

It belongs to the 'GDSL' lipolytic enzyme family.

This Arabidopsis thaliana (Mouse-ear cress) protein is GDSL esterase/lipase At4g10955.